A 57-amino-acid chain; its full sequence is uncharacterized protein (57 aa).

The chain crosses the membrane as a helical span at residues 34-51 (TALLDAAAVVVVPGLLAA).

Its subcellular location is the membrane. This is an uncharacterized protein from Dictyostelium discoideum (Social amoeba).